A 66-amino-acid polypeptide reads, in one-letter code: Small archaeal modifier protein 2 (66 aa).

Lys58 is covalently cross-linked (Glycyl lysine isopeptide (Lys-Gly) (interchain with G-Cter in SAMP2)). 1-thioglycine; alternate is present on Gly66. Residue Gly66 is modified to Glycyl adenylate; alternate. A Glycyl lysine isopeptide (Gly-Lys) (interchain with K-? in acceptor proteins); alternate cross-link involves residue Gly66.

As to quaternary structure, monomer. Monomeric and polymeric forms interact with NcsA. In terms of processing, the C-terminal glycine is likely acyl-adenylated (-COAMP) by UbaA, and also probably thiocarboxylated (-COSH) to function in sulfur transfer.

Its function is as follows. Functions as a protein modifier covalently attached to lysine residues of substrate proteins, as well as a sulfur carrier in tRNA thiolation. The protein modification process is termed sampylation and involves the formation of an isopeptide bond between the SAMP2 C-terminal glycine carboxylate and the epsilon-amino group of lysine residues on target proteins. Is able to form polymeric chains with itself at Lys-58, similar to ubiquitin and other ubiquitin-like proteins. May serve as a proteolytic signal in the cell to target proteins for degradation by proteasomes. The polypeptide is Small archaeal modifier protein 2 (samp2) (Haloferax volcanii (strain ATCC 29605 / DSM 3757 / JCM 8879 / NBRC 14742 / NCIMB 2012 / VKM B-1768 / DS2) (Halobacterium volcanii)).